The following is a 138-amino-acid chain: Small ribosomal subunit protein uS11c (138 aa).

The disordered stretch occupies residues 1–23 (MAKPIPRIGSRRNGRIGSRKSAR). Over residues 9–23 (GSRRNGRIGSRKSAR) the composition is skewed to basic residues.

The protein belongs to the universal ribosomal protein uS11 family. As to quaternary structure, part of the 30S ribosomal subunit.

The protein localises to the plastid. It localises to the chloroplast. This chain is Small ribosomal subunit protein uS11c, found in Vitis vinifera (Grape).